Consider the following 211-residue polypeptide: Homeobox protein Rhox5 (211 aa).

The disordered stretch occupies residues 38 to 129 (FFQAGEGRDE…PLRRPGSTQR (92 aa)). 2 stretches are compositionally biased toward gly residues: residues 52 to 62 (GQPGEGAVGTE) and 70 to 84 (GGEG…GPVG). Basic and acidic residues predominate over residues 102–119 (HEPVAEGTESVKSEDKQM). The segment at residues 119–176 (MPLRRPGSTQRRLAELERILLSSGSSSGGRSLIDGWISVCPECRNWFKIRRAAYRRNR) is a DNA-binding region (homeobox; atypical).

In terms of tissue distribution, highly expressed in placenta. Lower levels in testis, epididymis, ovary and skeletal muscle.

Its subcellular location is the nucleus. Functionally, transcription factor required for differentiation of embryonic stem cells (ESCs) into primordial germ cells. This chain is Homeobox protein Rhox5 (Rhox5), found in Rattus norvegicus (Rat).